The chain runs to 318 residues: tRNA U34 carboxymethyltransferase (318 aa).

Carboxy-S-adenosyl-L-methionine contacts are provided by Lys-88, Trp-102, Lys-107, Gly-126, Met-192, Tyr-196, and Arg-311.

It belongs to the class I-like SAM-binding methyltransferase superfamily. CmoB family. Homotetramer.

It catalyses the reaction carboxy-S-adenosyl-L-methionine + 5-hydroxyuridine(34) in tRNA = 5-carboxymethoxyuridine(34) in tRNA + S-adenosyl-L-homocysteine + H(+). Catalyzes carboxymethyl transfer from carboxy-S-adenosyl-L-methionine (Cx-SAM) to 5-hydroxyuridine (ho5U) to form 5-carboxymethoxyuridine (cmo5U) at position 34 in tRNAs. The sequence is that of tRNA U34 carboxymethyltransferase from Pseudomonas fluorescens (strain SBW25).